A 156-amino-acid chain; its full sequence is E3 ubiquitin-protein ligase LAP (156 aa).

An RING-CH-type zinc finger spans residues 1 to 55 (MSDICWICNDVCDERNNFCGCNEEYKVVHIKCMQLWINYSKKKECNLCKTKYNIK). At 1 to 73 (MSDICWICND…WNWCFNDKKT (73 aa)) the chain is on the cytoplasmic side. Zn(2+)-binding residues include Cys5, Cys8, Cys19, Cys21, His29, Cys32, Cys45, and Cys48. Residues 74–94 (TLFKIFFILFALVFIFLTITL) form a helical membrane-spanning segment. The Lumenal portion of the chain corresponds to 95 to 111 (SNDMANLVTGINDLICS). Residues 112–132 (IIFLIVYTVVMLTSICFSVFV) traverse the membrane as a helical segment. Residues 133–156 (VAIVVDFLLEAKEKNSFLTIREIV) are Cytoplasmic-facing.

It belongs to the poxviridae LAP protein family.

The protein localises to the host membrane. It localises to the host Golgi apparatus. Its subcellular location is the host trans-Golgi network membrane. It is found in the host early endosome membrane. The enzyme catalyses S-ubiquitinyl-[E2 ubiquitin-conjugating enzyme]-L-cysteine + [acceptor protein]-L-lysine = [E2 ubiquitin-conjugating enzyme]-L-cysteine + N(6)-ubiquitinyl-[acceptor protein]-L-lysine.. Functionally, E3 ubiquitin-protein ligase which promotes ubiquitination and subsequent degradation of host MHC-I and CD4 molecules, presumably to prevent lysis of infected cells by cytotoxic T-lymphocytes and NK cell. Binds target molecules through transmembrane interaction. The result of this ubiquitination is the enhancement of the endocytosis of the target chain and the delivery to the lysosome, where it is proteolytically destroyed. The protein is E3 ubiquitin-protein ligase LAP of Yaba-like disease virus (YLDV).